A 228-amino-acid chain; its full sequence is Geranylgeranylglyceryl phosphate synthase (228 aa).

Lys13 contributes to the sn-glycerol 1-phosphate binding site. Positions 15 and 41 each coordinate Mg(2+). Sn-glycerol 1-phosphate contacts are provided by residues 159–164 (YIEYSG), Gly189, and 209–210 (GN).

Belongs to the GGGP/HepGP synthase family. Group I subfamily. Requires Mg(2+) as cofactor.

The protein localises to the cytoplasm. It carries out the reaction sn-glycerol 1-phosphate + (2E,6E,10E)-geranylgeranyl diphosphate = sn-3-O-(geranylgeranyl)glycerol 1-phosphate + diphosphate. It functions in the pathway membrane lipid metabolism; glycerophospholipid metabolism. Functionally, prenyltransferase that catalyzes the transfer of the geranylgeranyl moiety of geranylgeranyl diphosphate (GGPP) to the C3 hydroxyl of sn-glycerol-1-phosphate (G1P). This reaction is the first ether-bond-formation step in the biosynthesis of archaeal membrane lipids. The polypeptide is Geranylgeranylglyceryl phosphate synthase (Methanospirillum hungatei JF-1 (strain ATCC 27890 / DSM 864 / NBRC 100397 / JF-1)).